Reading from the N-terminus, the 493-residue chain is Sorting nexin-4 (493 aa).

The interval 1-77 (MAVIDQDNFS…ILDCTVSDPH (77 aa)) is disordered. The span at 7-28 (DNFSNISWHSEQNAESAASTAQ) shows a compositional bias: polar residues. Residues 56-65 (MEHDELDHSG) are compositionally biased toward basic and acidic residues. One can recognise a PX domain in the interval 68-190 (ILDCTVSDPH…AFLESPDWNA (123 aa)). A 1,2-diacyl-sn-glycero-3-phospho-(1D-myo-inositol-3-phosphate) is bound by residues Arg-111, Thr-113, Lys-137, and Arg-156. Coiled-coil stretches lie at residues 248 to 292 (EIKE…QKLI), 338 to 363 (SGTL…EYLN), and 405 to 442 (EQAR…QVSR).

This sequence belongs to the sorting nexin family.

It localises to the cytoplasm. It is found in the membrane. The protein localises to the endosome membrane. In terms of biological role, sorting nexin, involved in the separation or division of vacuoles throughout the entire life cycle of the cells. Involved in retrieval of late-Golgi SNAREs from post-Golgi endosomes to the trans-Golgi network, for cytoplasm to vacuole transport (Cvt), and autophagy of large cargos including mitophagy, pexophagy and glycophagy. This is Sorting nexin-4 (vsp-5) from Neurospora crassa (strain ATCC 24698 / 74-OR23-1A / CBS 708.71 / DSM 1257 / FGSC 987).